The primary structure comprises 853 residues: EF-hand domain-containing family member B (853 aa).

Disordered regions lie at residues 1–31 (MCSFVRVGSPKPLQTSASPLEMSSLRRTRAP) and 244–266 (AQQPEEKKEPGSTEPGVEPPGNI). EF-hand domains lie at 581–616 (QNFDTLQVAFRHYDKKGDGVIDRAELHEACVQANLH) and 617–652 (LDKMLLDHLFDYCDVDQDGLINYLEFANFLNWKDRI). Residues D594, D598, E605, D630, D632, D634, and E641 each contribute to the Ca(2+) site.

Microtubule inner protein component of sperm flagellar doublet microtubules. Interacts with STIM1 and ORAI1; the interactions take place upon Ca(2+)-store depletion and dissociate through a Ca(2+)-dependent mechanism. Interaction with STIM1 inhibits STIM1 interaction with SARAF.

Its subcellular location is the cytoplasm. The protein localises to the cytoskeleton. It is found in the cilium axoneme. The protein resides in the flagellum axoneme. Its function is as follows. Microtubule inner protein (MIP) part of the dynein-decorated doublet microtubules (DMTs) in cilia axoneme, which is required for motile cilia beating. Cytosolic sensor for calcium, modulates the interaction of STIM1 and ORAI1 upon store depletion and the activation of store-operated Ca(2+) entry (SOCE) and NFAT translocation from cytosol to nucleus. This Mus musculus (Mouse) protein is EF-hand domain-containing family member B.